The sequence spans 145 residues: Large ribosomal subunit protein uL16 (145 aa).

Belongs to the universal ribosomal protein uL16 family. Part of the 50S ribosomal subunit.

Functionally, binds 23S rRNA and is also seen to make contacts with the A and possibly P site tRNAs. This Lachnospira eligens (strain ATCC 27750 / DSM 3376 / VPI C15-48 / C15-B4) (Eubacterium eligens) protein is Large ribosomal subunit protein uL16.